The primary structure comprises 131 residues: D-ribose pyranase (131 aa).

The active-site Proton donor is H20. Substrate-binding positions include D28, H98, and 120–122 (FSN).

Belongs to the RbsD / FucU family. RbsD subfamily. Homodecamer.

The protein localises to the cytoplasm. It catalyses the reaction beta-D-ribopyranose = beta-D-ribofuranose. The protein operates within carbohydrate metabolism; D-ribose degradation; D-ribose 5-phosphate from beta-D-ribopyranose: step 1/2. Its function is as follows. Catalyzes the interconversion of beta-pyran and beta-furan forms of D-ribose. This is D-ribose pyranase from Petrotoga mobilis (strain DSM 10674 / SJ95).